Here is a 153-residue protein sequence, read N- to C-terminus: UPF0756 membrane protein BCB4264_A4705 (153 aa).

4 helical membrane passes run 8-28 (FLFI…TVAI), 54-74 (LGVT…EIGF), 87-107 (WIAL…VQLL), and 117-137 (LVFG…GPLI).

This sequence belongs to the UPF0756 family.

The protein localises to the cell membrane. The polypeptide is UPF0756 membrane protein BCB4264_A4705 (Bacillus cereus (strain B4264)).